The primary structure comprises 142 residues: Ig heavy chain V region IR2 (142 aa).

Positions 1–19 (MDLRLTYVFIVAILKGVLC) are cleaved as a signal peptide. One can recognise an Ig-like domain in the interval 20 to 133 (EVKLEESGGG…YSENWFVYWG (114 aa)).

The sequence is that of Ig heavy chain V region IR2 from Rattus norvegicus (Rat).